Here is a 231-residue protein sequence, read N- to C-terminus: Endo-1,4-beta-xylanase 4 (231 aa).

The signal sequence occupies residues 1 to 18; the sequence is MVSFTTILVAATAALVAA. In terms of domain architecture, GH11 spans 42–230; sequence GGTPSSTGTH…SSGSSTVTIQ (189 aa). Asparagine 99 carries an N-linked (GlcNAc...) asparagine glycan. The Nucleophile role is filled by glutamate 126. Glutamate 217 serves as the catalytic Proton donor.

Belongs to the glycosyl hydrolase 11 (cellulase G) family.

It localises to the secreted. It catalyses the reaction Endohydrolysis of (1-&gt;4)-beta-D-xylosidic linkages in xylans.. It participates in glycan degradation; xylan degradation. Functionally, endo-1,4-beta-xylanase involved in the hydrolysis of xylan, a major structural heterogeneous polysaccharide found in plant biomass representing the second most abundant polysaccharide in the biosphere, after cellulose. The polypeptide is Endo-1,4-beta-xylanase 4 (XYL4) (Pyricularia grisea (Crabgrass-specific blast fungus)).